A 342-amino-acid polypeptide reads, in one-letter code: Dihydroorotate dehydrogenase (quinone) (342 aa).

Residues 61-65 (AGLDK) and Thr-85 each bind FMN. Substrate is bound at residue Lys-65. 110-114 (NRMGF) provides a ligand contact to substrate. 2 residues coordinate FMN: Asn-138 and Asn-171. Asn-171 is a binding site for substrate. Catalysis depends on Ser-174, which acts as the Nucleophile. Asn-176 contacts substrate. 2 residues coordinate FMN: Lys-216 and Thr-244. Position 245-246 (245-246 (NT)) interacts with substrate. FMN-binding positions include Gly-267, Gly-296, and 317 to 318 (YS).

The protein belongs to the dihydroorotate dehydrogenase family. Type 2 subfamily. Monomer. FMN is required as a cofactor.

Its subcellular location is the cell membrane. The enzyme catalyses (S)-dihydroorotate + a quinone = orotate + a quinol. The protein operates within pyrimidine metabolism; UMP biosynthesis via de novo pathway; orotate from (S)-dihydroorotate (quinone route): step 1/1. In terms of biological role, catalyzes the conversion of dihydroorotate to orotate with quinone as electron acceptor. This chain is Dihydroorotate dehydrogenase (quinone), found in Pseudomonas paraeruginosa (strain DSM 24068 / PA7) (Pseudomonas aeruginosa (strain PA7)).